Consider the following 454-residue polypeptide: MRCHLKKWVVVAAGLSILTSLYVYMQRAQSGNLKGSVIWTWDRESWMEGIKSHYLHFNISINVLGGVLQPSKKYLTVGLSSVRREKGFYLHDTLQSIFSESSEEELDQMVVVVLLADFDLPWIQQTADKISREFAVQLSKGRLLVIHANKEHYPPLTGLKRNFNDAPDRVSFRSKQNVDYSFLLHFSSNLSQYYIMLEDDVGCSRNFLSSIQQHIRSMTDSKWVTLEFSKLGYIGKLYQSKDLPTLARFLYNFYQEMPCDFLLSHFRRLLMQDKVIRFRPSLFQHMGTYSSFRGTYNRLKDEDFVQELADNPPADVRTNIQVFQTYVPEKAYSQDVEYFWGVSPIGTESFFLVVFREAVRISRVQIHTGSDGKDELASADVELGRVLVTGEPAVDCSGFKTLGSLQHGQFNEEGVQKLLPDAVVCLRIRVTAAQPEWVIISRIQVWTVKEDKTI.

Topologically, residues 1–6 (MRCHLK) are cytoplasmic. Residues 7-24 (KWVVVAAGLSILTSLYVY) traverse the membrane as a helical; Signal-anchor for type II membrane protein segment. Over 25-454 (MQRAQSGNLK…VWTVKEDKTI (430 aa)) the chain is Lumenal. N-linked (GlcNAc...) asparagine glycans are attached at residues asparagine 58 and asparagine 189.

It belongs to the glycosyltransferase 54 family. A divalent metal cation serves as cofactor.

It is found in the golgi apparatus membrane. The catalysed reaction is N(4)-{beta-D-GlcNAc-(1-&gt;2)-alpha-D-Man-(1-&gt;3)-[beta-D-GlcNAc-(1-&gt;2)-alpha-D-Man-(1-&gt;6)]-beta-D-Man-(1-&gt;4)-beta-D-GlcNAc-(1-&gt;4)-beta-D-GlcNAc}-L-asparaginyl-[protein] + UDP-N-acetyl-alpha-D-glucosamine = N(4)-{beta-D-GlcNAc-(1-&gt;2)-[beta-D-GlcNAc-(1-&gt;4)]-alpha-D-Man-(1-&gt;3)-[beta-D-GlcNAc-(1-&gt;2)-alpha-D-Man-(1-&gt;6)]-beta-D-Man-(1-&gt;4)-beta-D-GlcNAc-(1-&gt;4)-beta-D-GlcNAc}-L-asparaginyl-[protein] + UDP + H(+). It functions in the pathway protein modification; protein glycosylation. Functionally, glycosyltransferase that participates in the transfer of N-acetylglucosamine (GlcNAc) to the core mannose residues of N-linked glycans. Catalyzes the formation of the GlcNAcbeta1-4 branch on the GlcNAcbeta1-2Manalpha1-3 arm of the core structure of N-linked glycans. The protein is Alpha-1,3-mannosyl-glycoprotein 4-beta-N-acetylglucosaminyltransferase C (mgat4c) of Danio rerio (Zebrafish).